A 523-amino-acid polypeptide reads, in one-letter code: Protein NAM8 (523 aa).

A disordered region spans residues Met1 to Ser35. The span at Thr24 to Ser35 shows a compositional bias: low complexity. 3 RRM domains span residues Asn54–Ser145, Cys163–Gly242, and Thr313–Ser385. Positions Pro239–Leu260 are disordered. A compositionally biased stretch (polar residues) spans Thr240 to Leu260.

As to quaternary structure, component of the U1 small nuclear ribonucleoprotein complex (U1 snRNP).

In terms of biological role, component of the U1 small nuclear ribonucleoprotein complex (U1 snRNP) involved in the initiation of meiotic recombination. Involved in the formation of DSBs at recombination hot-spots through meiosis-specific splicing of REC107 pre-mRNA. Collaborates with MER1 to promote splicing of essential meiotic mRNAs REC10, AMA1, MER3, HFM1, SPO22 and PCH2. NAM8 interacts with the pre-mRNA downstream of the 5' splice site, in a region of non-conserved sequence and is required for efficient splicing of uncapped RNA precursor. The sequence is that of Protein NAM8 from Saccharomyces cerevisiae (strain ATCC 204508 / S288c) (Baker's yeast).